A 198-amino-acid chain; its full sequence is ATP-dependent Clp protease proteolytic subunit (198 aa).

Serine 98 serves as the catalytic Nucleophile. The active site involves histidine 123.

This sequence belongs to the peptidase S14 family. As to quaternary structure, fourteen ClpP subunits assemble into 2 heptameric rings which stack back to back to give a disk-like structure with a central cavity, resembling the structure of eukaryotic proteasomes.

It is found in the cytoplasm. It carries out the reaction Hydrolysis of proteins to small peptides in the presence of ATP and magnesium. alpha-casein is the usual test substrate. In the absence of ATP, only oligopeptides shorter than five residues are hydrolyzed (such as succinyl-Leu-Tyr-|-NHMec, and Leu-Tyr-Leu-|-Tyr-Trp, in which cleavage of the -Tyr-|-Leu- and -Tyr-|-Trp bonds also occurs).. In terms of biological role, cleaves peptides in various proteins in a process that requires ATP hydrolysis. Has a chymotrypsin-like activity. Plays a major role in the degradation of misfolded proteins. The protein is ATP-dependent Clp protease proteolytic subunit of Ehrlichia ruminantium (strain Welgevonden).